The chain runs to 53 residues: UPF0391 membrane protein Acid_3618 (53 aa).

Helical transmembrane passes span 6–26 and 28–48; these read LVFL…LAGA and VGIA…AFLM.

Belongs to the UPF0391 family.

The protein resides in the cell membrane. In Solibacter usitatus (strain Ellin6076), this protein is UPF0391 membrane protein Acid_3618.